Consider the following 336-residue polypeptide: Uridine nucleosidase 1 (336 aa).

Catalysis depends on residues D29 and H260.

Belongs to the IUNH family. In terms of assembly, homodimer. Component of the NSH heterocomplex made of URH1/NSH1 and URH2/NSH2 which exhibits strong xanthosine nucleosidase activity. Interacts with URH2. Expressed ubiquitously in leaves, flowers, stems, pollen cells, root tip meristem and root vasculature.

The protein localises to the cytoplasm. It carries out the reaction uridine + H2O = D-ribose + uracil. It catalyses the reaction xanthosine + H2O = D-ribose + xanthine. The catalysed reaction is inosine + H2O = hypoxanthine + D-ribose. The enzyme catalyses adenosine + H2O = D-ribose + adenine. Involved in purine and pyrimidine breakdown rather than in pyrimidine salvage, especially in response to dark stress. Together with URH2, required for efficient inosine and xanthosine hydrolytic activities. Unable to use cytidine as a substrate. Can use uridine, inosine, adenosine as well as the cytokinin derivative isopentenyladenine-riboside as substrates. Also hydrolyzes xanthosine with high efficiency. The protein is Uridine nucleosidase 1 of Arabidopsis thaliana (Mouse-ear cress).